Reading from the N-terminus, the 224-residue chain is MINCLIVDDDKKLLQYVSSHLERESIQTHTFTSGEASLDFLENKNVDIAIVDIMMSGMDGFELCQTLKDDYHIPVIMLTARDALSDKERAFLSGTDDYVTKPFEVKELLFRIKAVLRRYQINADNELQLGNLILNQSYMEITVGSKTMNLPNKEFQLLFLLASNPKHIFTRDDIIEKIWGFDYEGDDRTVDVHIKRLRQRLSKLKSSVSIQTVRGQGYRVDQNV.

Positions 3–116 constitute a Response regulatory domain; the sequence is NCLIVDDDKK…ELLFRIKAVL (114 aa). The residue at position 52 (D52) is a 4-aspartylphosphate. The ompR/PhoB-type DNA-binding region spans 124 to 222; that stretch reads DNELQLGNLI…VRGQGYRVDQ (99 aa).

Phosphorylated by HssS.

The protein localises to the cytoplasm. Functionally, member of the two-component regulatory system HssS/HssR involved in intracellular heme homeostasis and tempering of staphylococcal virulence. Phosphorylated HssR binds to a direct repeat sequence within hrtAB promoter and activates the expression of hrtAB, an efflux pump, in response to extracellular heme, hemin, hemoglobin or blood. The polypeptide is Heme response regulator HssR (hssR) (Staphylococcus epidermidis (strain ATCC 35984 / DSM 28319 / BCRC 17069 / CCUG 31568 / BM 3577 / RP62A)).